A 477-amino-acid chain; its full sequence is Aspartyl/glutamyl-tRNA(Asn/Gln) amidotransferase subunit B (477 aa).

This sequence belongs to the GatB/GatE family. GatB subfamily. As to quaternary structure, heterotrimer of A, B and C subunits.

The enzyme catalyses L-glutamyl-tRNA(Gln) + L-glutamine + ATP + H2O = L-glutaminyl-tRNA(Gln) + L-glutamate + ADP + phosphate + H(+). It catalyses the reaction L-aspartyl-tRNA(Asn) + L-glutamine + ATP + H2O = L-asparaginyl-tRNA(Asn) + L-glutamate + ADP + phosphate + 2 H(+). Allows the formation of correctly charged Asn-tRNA(Asn) or Gln-tRNA(Gln) through the transamidation of misacylated Asp-tRNA(Asn) or Glu-tRNA(Gln) in organisms which lack either or both of asparaginyl-tRNA or glutaminyl-tRNA synthetases. The reaction takes place in the presence of glutamine and ATP through an activated phospho-Asp-tRNA(Asn) or phospho-Glu-tRNA(Gln). This is Aspartyl/glutamyl-tRNA(Asn/Gln) amidotransferase subunit B from Sulfurovum sp. (strain NBC37-1).